The following is a 497-amino-acid chain: L-amino-acid oxidase BjussuLAAO-I (497 aa).

Positions 1–13 (MNVFFMFSKPGKL) are cleaved as a signal peptide. A disulfide bridge connects residues Cys23 and Cys186. FAD contacts are provided by residues 56 to 57 (MS), 76 to 77 (EA), 76 to 80 (EASER), Gln84, and 100 to 103 (GPMR). Arg103 provides a ligand contact to substrate. N-linked (GlcNAc...) asparagine glycosylation occurs at Asn185. His236 provides a ligand contact to substrate. Residue Val274 participates in FAD binding. Residues Cys344 and Cys425 are joined by a disulfide bond. A substrate-binding site is contributed by Tyr385. FAD contacts are provided by residues Glu470, 477 to 482 (GWIAST), and 478 to 482 (WIAST). 477 to 478 (GW) contributes to the substrate binding site.

This sequence belongs to the flavin monoamine oxidase family. FIG1 subfamily. In terms of assembly, homodimer; non-covalently linked. FAD is required as a cofactor. Expressed by the venom gland.

Its subcellular location is the secreted. The enzyme catalyses an L-alpha-amino acid + O2 + H2O = a 2-oxocarboxylate + H2O2 + NH4(+). It carries out the reaction L-leucine + O2 + H2O = 4-methyl-2-oxopentanoate + H2O2 + NH4(+). It catalyses the reaction L-phenylalanine + O2 + H2O = 3-phenylpyruvate + H2O2 + NH4(+). The catalysed reaction is L-tryptophan + O2 + H2O = indole-3-pyruvate + H2O2 + NH4(+). The enzyme catalyses L-methionine + O2 + H2O = 4-methylsulfanyl-2-oxobutanoate + H2O2 + NH4(+). It carries out the reaction L-isoleucine + O2 + H2O = (S)-3-methyl-2-oxopentanoate + H2O2 + NH4(+). It catalyses the reaction L-tyrosine + O2 + H2O = 3-(4-hydroxyphenyl)pyruvate + H2O2 + NH4(+). The catalysed reaction is L-cysteine + O2 + H2O = 2-oxo-3-sulfanylpropanoate + H2O2 + NH4(+). Its function is as follows. Catalyzes an oxidative deamination of predominantly hydrophobic and aromatic L-amino acids, thus producing hydrogen peroxide that may contribute to the diverse toxic effects of this enzyme. Shows high specificity for L-Met, L-Leu, L-Phe, L-Tyr, L-Ile, L-Trp, a moderate activity on L-Cys and low activity on L-Val, L-Lys, L-Arg, L-His, L-Gln, L-Thr and L-Ser. Exhibits diverse biological activities, such as hemorrhage, hemolysis, edema, apoptosis of vascular endothelial cells or tumor cell lines, and antibacterial, as well as regulation of platelet aggregation. Effects of snake L-amino oxidases on platelets are controversial, since they either induce aggregation or inhibit agonist-induced aggregation. These different effects are probably due to different experimental conditions. In vitro, shows parasiticidal activities against both trypanosomes and leishmania, as a result of enzyme-catalyzed hydrogen peroxide production. The protein is L-amino-acid oxidase BjussuLAAO-I of Bothrops jararacussu (Jararacussu).